We begin with the raw amino-acid sequence, 291 residues long: E3 ubiquitin-protein ligase MARCHF8 (291 aa).

A disordered region spans residues 22-72 (YRSKTKEKEREEQNEKTLGHFMSHSSNISKAGSPPSASAPAPVSSFSRTSI). Over residues 25–39 (KTKEKEREEQNEKTL) the composition is skewed to basic and acidic residues. The segment covering 50 to 72 (SKAGSPPSASAPAPVSSFSRTSI) has biased composition (low complexity). Residues 72–133 (ITPSSQDICR…ELCKYEFIME (62 aa)) form an RING-CH-type zinc finger. The Zn(2+) site is built by Cys-80, Cys-83, Cys-97, Cys-99, His-107, Cys-110, Cys-123, and Cys-126. Transmembrane regions (helical) follow at residues 157–177 (CSVTFHVIAITCVVWSLYVLI) and 197–217 (FWTKLVVVAIGFTGGLLFMYV). Ser-253 carries the post-translational modification Phosphoserine.

Interacts with CD86. As to expression, broadly expressed. Present in immature dendritic cells (at protein level).

The protein resides in the golgi apparatus membrane. The protein localises to the endoplasmic reticulum membrane. It is found in the cytoplasmic vesicle membrane. Its subcellular location is the lysosome membrane. It localises to the early endosome membrane. The catalysed reaction is S-ubiquitinyl-[E2 ubiquitin-conjugating enzyme]-L-cysteine + [acceptor protein]-L-lysine = [E2 ubiquitin-conjugating enzyme]-L-cysteine + N(6)-ubiquitinyl-[acceptor protein]-L-lysine.. It functions in the pathway protein modification; protein ubiquitination. Its function is as follows. E3 ubiquitin-protein ligase that plays several important roles in innate immunity and adaptive immunity. Mediates ubiquitination of CD86 and MHC class II proteins, such as HLA-DR alpha and beta, and promotes their subsequent endocytosis and sorting to lysosomes via multivesicular bodies. Possesses a very broad antiviral activity by specifically inactivating different viral fusion proteins. Targets and ubiquitinates cytoplasmic lysine residues of viral envelope glycoproteins with single transmembrane domains leading to their lysosomal degradation. Therefore, shows broad-spectrum inhibition against many viruses including retroviruses, rhabdoviruses, arenaviruses, sarbecoviruses or influenzaviruses. Strongly blocks human immunodeficiency virus type 1 envelope glycoprotein incorporation into virions by down-regulating its cell surface expression. Also blocks ebola virus glycoprotein/GP incorporation via surface down-regulation. Mediates 'Lys-63'-linked polyubiquitination of influenza M2 to target it to lysosome for degradation. Mediates the regulation of constitutive ubiquitination and trafficking of the viral restriction factor BST2 within the endocytic pathway. Plays a role in maintenance of immune tolerance to self by promoting the turnover and proteasomal degradation of PD-L1/CD274 via ubiquitination. Catalyzes the 'Lys-63'-linked polyubiquitylation of cGAS thereby inhibiting its DNA binding ability and impairing its antiviral innate immunity. Negatively regulates IL7-mediated T-cell homeostasis by mediating 'Lys-27'-linked polyubiquitination of IL7R, leading to its lysosomal degradation. Functionally, (Microbial infection) Mediates 'Lys-63'-linked polyubiquitination of hepatitis C virus/HCV protein NS2 which allows its binding to HGS, an ESCRT-0 complex component, and this interaction is essential for HCV envelopment. This is E3 ubiquitin-protein ligase MARCHF8 from Homo sapiens (Human).